A 388-amino-acid polypeptide reads, in one-letter code: Succinate--CoA ligase [ADP-forming] subunit beta (388 aa).

The ATP-grasp domain maps to 9-244 (KQLFAEYGLP…PSQEDEREAH (236 aa)). Residues Lys46, 53–55 (GRG), Glu99, Ser102, and Glu107 contribute to the ATP site. Residues Asn199 and Asp213 each coordinate Mg(2+). Substrate-binding positions include Asn264 and 321 to 323 (GIV).

This sequence belongs to the succinate/malate CoA ligase beta subunit family. In terms of assembly, heterotetramer of two alpha and two beta subunits. It depends on Mg(2+) as a cofactor.

The enzyme catalyses succinate + ATP + CoA = succinyl-CoA + ADP + phosphate. The catalysed reaction is GTP + succinate + CoA = succinyl-CoA + GDP + phosphate. It functions in the pathway carbohydrate metabolism; tricarboxylic acid cycle; succinate from succinyl-CoA (ligase route): step 1/1. Succinyl-CoA synthetase functions in the citric acid cycle (TCA), coupling the hydrolysis of succinyl-CoA to the synthesis of either ATP or GTP and thus represents the only step of substrate-level phosphorylation in the TCA. The beta subunit provides nucleotide specificity of the enzyme and binds the substrate succinate, while the binding sites for coenzyme A and phosphate are found in the alpha subunit. This is Succinate--CoA ligase [ADP-forming] subunit beta from Aliivibrio salmonicida (strain LFI1238) (Vibrio salmonicida (strain LFI1238)).